A 302-amino-acid chain; its full sequence is Cyclin-dependent kinase 1 (302 aa).

Positions 4–287 (YLKIEKIGEG…ARQAMTHPYF (284 aa)) constitute a Protein kinase domain. Residues 10–18 (IGEGTYGVV) and Lys33 each bind ATP. At Thr14 the chain carries Phosphothreonine. Phosphotyrosine; by wee1 and wee2 is present on Tyr15. Catalysis depends on Asp128, which acts as the Proton acceptor. Position 161 is a phosphothreonine; by cak (Thr161).

The protein belongs to the protein kinase superfamily. CMGC Ser/Thr protein kinase family. CDC2/CDKX subfamily. In terms of assembly, forms a stable but non-covalent complex with cyclin B in mature oocytes. Phosphorylation at Tyr-15 by wee1 and wee2 inhibits the protein kinase activity and acts negative regulator of entry into mitosis (G2 to M transition).

The protein resides in the nucleus. The protein localises to the cytoplasm. It is found in the cytoskeleton. It localises to the microtubule organizing center. Its subcellular location is the centrosome. The enzyme catalyses L-seryl-[protein] + ATP = O-phospho-L-seryl-[protein] + ADP + H(+). It catalyses the reaction L-threonyl-[protein] + ATP = O-phospho-L-threonyl-[protein] + ADP + H(+). The catalysed reaction is [DNA-directed RNA polymerase] + ATP = phospho-[DNA-directed RNA polymerase] + ADP + H(+). Its activity is regulated as follows. Phosphorylation at Thr-14 or Tyr-15 inactivates the enzyme, while phosphorylation at Thr-161 activates it. Functionally, plays a key role in the control of the eukaryotic cell cycle by modulating the centrosome cycle as well as mitotic onset; promotes G2-M transition via association with multiple interphase cyclins. During G2 and early mitosis, CDC25A/B/C-mediated dephosphorylation activates CDK1/cyclin complexes which phosphorylate several substrates that trigger at least centrosome separation, Golgi dynamics, nuclear envelope breakdown and chromosome condensation. Once chromosomes are condensed and aligned at the metaphase plate, CDK1 activity is switched off by WEE1- and PKMYT1-mediated phosphorylation to allow sister chromatid separation, chromosome decondensation, reformation of the nuclear envelope and cytokinesis. Catalyzes lamin (LMNA, LMNB1 and LMNB2) phosphorylation at the onset of mitosis, promoting nuclear envelope breakdown. This chain is Cyclin-dependent kinase 1 (cdk1), found in Carassius auratus (Goldfish).